Here is a 111-residue protein sequence, read N- to C-terminus: Nucleoid-associated protein Ppha_1174 (111 aa).

This sequence belongs to the YbaB/EbfC family. As to quaternary structure, homodimer.

The protein localises to the cytoplasm. Its subcellular location is the nucleoid. Binds to DNA and alters its conformation. May be involved in regulation of gene expression, nucleoid organization and DNA protection. The protein is Nucleoid-associated protein Ppha_1174 of Pelodictyon phaeoclathratiforme (strain DSM 5477 / BU-1).